Reading from the N-terminus, the 73-residue chain is Large ribosomal subunit protein bL31 (73 aa).

This sequence belongs to the bacterial ribosomal protein bL31 family. Type A subfamily. In terms of assembly, part of the 50S ribosomal subunit.

Functionally, binds the 23S rRNA. In Cereibacter sphaeroides (strain ATCC 17029 / ATH 2.4.9) (Rhodobacter sphaeroides), this protein is Large ribosomal subunit protein bL31.